Consider the following 290-residue polypeptide: ATP synthase gamma chain (290 aa).

The protein belongs to the ATPase gamma chain family. In terms of assembly, F-type ATPases have 2 components, CF(1) - the catalytic core - and CF(0) - the membrane proton channel. CF(1) has five subunits: alpha(3), beta(3), gamma(1), delta(1), epsilon(1). CF(0) has three main subunits: a, b and c.

Its subcellular location is the cell inner membrane. Produces ATP from ADP in the presence of a proton gradient across the membrane. The gamma chain is believed to be important in regulating ATPase activity and the flow of protons through the CF(0) complex. The sequence is that of ATP synthase gamma chain from Dinoroseobacter shibae (strain DSM 16493 / NCIMB 14021 / DFL 12).